Reading from the N-terminus, the 403-residue chain is Malate dehydrogenase, chloroplastic (403 aa).

Residues 1–80 constitute a chloroplast transit peptide; the sequence is MATATSASLF…DKKPYGFKIN (80 aa). Residues 89–95 and Asp-115 contribute to the NAD(+) site; that span reads GAAGGIG. Residues Arg-162 and Arg-168 each coordinate substrate. NAD(+) contacts are provided by residues Asn-175 and 198 to 200; that span reads ISN. Residues Asn-200 and Arg-234 each contribute to the substrate site. The Proton acceptor role is filled by His-258. Met-309 contributes to the NAD(+) binding site.

The protein belongs to the LDH/MDH superfamily. MDH type 1 family. Homodimer. As to expression, expressed in rosette leaves. Expressed in meristematic regions of roots and shoots, cotyledons, young leaves, trichomes, stamen, pollen, tapetum, gynoecium and ovules.

It is found in the plastid. The protein resides in the chloroplast stroma. It carries out the reaction (S)-malate + NAD(+) = oxaloacetate + NADH + H(+). Its function is as follows. Catalyzes a reversible NAD-dependent dehydrogenase reaction involved in central metabolism and redox homeostasis between organelle compartments. Plays a key role in the metabolism of dark chloroplasts and non-green plastids. Essential for embryo viability. Plays an essential role in heterotrophic metabolism in embryos, and autotrophic metabolism in photosynthetic tissues as well. In Arabidopsis thaliana (Mouse-ear cress), this protein is Malate dehydrogenase, chloroplastic.